The following is a 33-amino-acid chain: Helofensin-1 (33 aa).

The protein belongs to the beta-defensin family. Helofensin subfamily. Expressed by the venom gland.

Its subcellular location is the secreted. Its function is as follows. Lethal toxin which possesses an inhibitory effect on direct electrical stimulation of the isolated hemi-diaphragm. Neither hemorrhagic nor hemolytic activities are detected. Phospholipase A2 activity, proteolytic activity and arginine esterolytic activity are absent. This chain is Helofensin-1, found in Heloderma horridum horridum (Mexican beaded lizard).